We begin with the raw amino-acid sequence, 650 residues long: Sterol O-acyltransferase 2 (650 aa).

Residues 41–79 are disordered; that stretch reads LTSSNNSCASEHEGEGEGEDERPATTSSAPTQNHSAGDV. Polar residues predominate over residues 64 to 75; sequence ATTSSAPTQNHS. The next 5 helical transmembrane spans lie at 223–243, 300–320, 412–432, 450–470, and 493–513; these read FSGL…KALI, TGWA…MYLT, INVS…QIEY, IFGT…PVAM, and LLVD…YLIW. The short motif at 531 to 537 is the FYXDWWN motif element; it reads FYGDWWN. 2 consecutive transmembrane segments (helical) span residues 575–595 and 630–650; these read ATLM…YVIF and VIFW…YLTF. Histidine 587 is an active-site residue.

It belongs to the membrane-bound acyltransferase family. Sterol o-acyltransferase subfamily.

It localises to the endoplasmic reticulum membrane. Sterol O-acyltransferase that catalyzes the formation of stery esters. This Saccharomyces uvarum (strain ATCC 76518 / CBS 7001 / CLIB 283 / NBRC 10550 / MCYC 623 / NCYC 2669 / NRRL Y-11845) (Yeast) protein is Sterol O-acyltransferase 2 (ARE2).